The sequence spans 337 residues: Holliday junction branch migration complex subunit RuvB (337 aa).

Residues 4-184 (QDRIISAELK…FGIVQRLEFY (181 aa)) are large ATPase domain (RuvB-L). ATP is bound by residues Ile-23, Arg-24, Gly-65, Lys-68, Thr-69, Thr-70, 131-133 (EDY), Arg-174, Tyr-184, and Arg-221. Thr-69 contributes to the Mg(2+) binding site. Residues 185 to 255 (DVESLTTIVA…VAQRALDMLS (71 aa)) form a small ATPAse domain (RuvB-S) region. The head domain (RuvB-H) stretch occupies residues 258 to 337 (SQGFDHLDRR…FNYQLPSDFK (80 aa)). DNA is bound by residues Arg-313 and Arg-318.

It belongs to the RuvB family. As to quaternary structure, homohexamer. Forms an RuvA(8)-RuvB(12)-Holliday junction (HJ) complex. HJ DNA is sandwiched between 2 RuvA tetramers; dsDNA enters through RuvA and exits via RuvB. An RuvB hexamer assembles on each DNA strand where it exits the tetramer. Each RuvB hexamer is contacted by two RuvA subunits (via domain III) on 2 adjacent RuvB subunits; this complex drives branch migration. In the full resolvosome a probable DNA-RuvA(4)-RuvB(12)-RuvC(2) complex forms which resolves the HJ.

The protein resides in the cytoplasm. The enzyme catalyses ATP + H2O = ADP + phosphate + H(+). The RuvA-RuvB-RuvC complex processes Holliday junction (HJ) DNA during genetic recombination and DNA repair, while the RuvA-RuvB complex plays an important role in the rescue of blocked DNA replication forks via replication fork reversal (RFR). RuvA specifically binds to HJ cruciform DNA, conferring on it an open structure. The RuvB hexamer acts as an ATP-dependent pump, pulling dsDNA into and through the RuvAB complex. RuvB forms 2 homohexamers on either side of HJ DNA bound by 1 or 2 RuvA tetramers; 4 subunits per hexamer contact DNA at a time. Coordinated motions by a converter formed by DNA-disengaged RuvB subunits stimulates ATP hydrolysis and nucleotide exchange. Immobilization of the converter enables RuvB to convert the ATP-contained energy into a lever motion, pulling 2 nucleotides of DNA out of the RuvA tetramer per ATP hydrolyzed, thus driving DNA branch migration. The RuvB motors rotate together with the DNA substrate, which together with the progressing nucleotide cycle form the mechanistic basis for DNA recombination by continuous HJ branch migration. Branch migration allows RuvC to scan DNA until it finds its consensus sequence, where it cleaves and resolves cruciform DNA. The chain is Holliday junction branch migration complex subunit RuvB from Marinomonas sp. (strain MWYL1).